We begin with the raw amino-acid sequence, 440 residues long: Glutamyl-tRNA reductase (440 aa).

Substrate is bound by residues 55-58 (TCNR), Ser-115, 120-122 (ETQ), and Gln-126. The active-site Nucleophile is Cys-56. An NADP(+)-binding site is contributed by 199-204 (GSGEMG).

This sequence belongs to the glutamyl-tRNA reductase family. As to quaternary structure, homodimer.

The enzyme catalyses (S)-4-amino-5-oxopentanoate + tRNA(Glu) + NADP(+) = L-glutamyl-tRNA(Glu) + NADPH + H(+). Its pathway is porphyrin-containing compound metabolism; protoporphyrin-IX biosynthesis; 5-aminolevulinate from L-glutamyl-tRNA(Glu): step 1/2. Catalyzes the NADPH-dependent reduction of glutamyl-tRNA(Glu) to glutamate 1-semialdehyde (GSA). This Helicobacter hepaticus (strain ATCC 51449 / 3B1) protein is Glutamyl-tRNA reductase.